Consider the following 615-residue polypeptide: 1-deoxy-D-xylulose-5-phosphate synthase (615 aa).

Thiamine diphosphate is bound by residues histidine 77 and 118 to 120 (GHS). Residue aspartate 149 coordinates Mg(2+). Residues 150 to 151 (GA), asparagine 178, tyrosine 286, and glutamate 367 contribute to the thiamine diphosphate site. Residue asparagine 178 coordinates Mg(2+).

This sequence belongs to the transketolase family. DXPS subfamily. Homodimer. Requires Mg(2+) as cofactor. The cofactor is thiamine diphosphate.

It catalyses the reaction D-glyceraldehyde 3-phosphate + pyruvate + H(+) = 1-deoxy-D-xylulose 5-phosphate + CO2. The protein operates within metabolic intermediate biosynthesis; 1-deoxy-D-xylulose 5-phosphate biosynthesis; 1-deoxy-D-xylulose 5-phosphate from D-glyceraldehyde 3-phosphate and pyruvate: step 1/1. Its function is as follows. Catalyzes the acyloin condensation reaction between C atoms 2 and 3 of pyruvate and glyceraldehyde 3-phosphate to yield 1-deoxy-D-xylulose-5-phosphate (DXP). This chain is 1-deoxy-D-xylulose-5-phosphate synthase, found in Glaesserella parasuis serovar 5 (strain SH0165) (Haemophilus parasuis).